Here is a 604-residue protein sequence, read N- to C-terminus: Prostaglandin G/H synthase 2 (604 aa).

Residues 1 to 17 form the signal peptide; the sequence is MLFRAVLLCAALGLSQA. The 38-residue stretch at 18–55 folds into the EGF-like domain; that stretch reads ANPCCSNPCQNRGECMSTGFDQYKCDCTRTGFYGENCT. Intrachain disulfides connect Cys21-Cys32, Cys22-Cys145, Cys26-Cys42, and Cys44-Cys54. Asn53 is a glycosylation site (N-linked (GlcNAc...) asparagine). Arg106 contacts substrate. N-linked (GlcNAc...) asparagine glycosylation is present at Asn130. Catalysis depends on His193, which acts as the Proton acceptor. Position 341 (Tyr341) interacts with substrate. The active-site For cyclooxygenase activity is the Tyr371. His374 serves as a coordination point for heme b. Asn396 carries N-linked (GlcNAc...) asparagine glycosylation. An S-nitrosocysteine modification is found at Cys526. A disulfide bond links Cys555 and Cys561. Ser565 bears the O-acetylserine; by SPHK1 mark. N-linked (GlcNAc...) asparagine glycosylation is present at Asn580.

Belongs to the prostaglandin G/H synthase family. As to quaternary structure, homodimer. The cofactor is heme b. S-nitrosylation by NOS2 (iNOS) activates enzyme activity. S-nitrosylation may take place on different Cys residues in addition to Cys-526. Post-translationally, acetylated at Ser-565 by SPHK1. During neuroinflammation, acetylation by SPHK1 promotes neuronal secretion of specialized preresolving mediators (SPMs), especially 15-R-lipoxin A4, which results in an increase of phagocytic microglia. As to expression, following colon injury, expressed in the wound bed mesenchyme during the first phase of repair, probably by colonic mesenchymal stem cells (at protein level).

Its subcellular location is the microsome membrane. It localises to the endoplasmic reticulum membrane. The protein localises to the nucleus inner membrane. The protein resides in the nucleus outer membrane. The catalysed reaction is (5Z,8Z,11Z,14Z)-eicosatetraenoate + AH2 + 2 O2 = prostaglandin H2 + A + H2O. It carries out the reaction (5Z,8Z,11Z,14Z)-eicosatetraenoate + 2 O2 = prostaglandin G2. The enzyme catalyses prostaglandin G2 + AH2 = prostaglandin H2 + A + H2O. It catalyses the reaction (5Z,8Z,11Z,14Z,17Z)-eicosapentaenoate + 2 O2 = prostaglandin G3. The catalysed reaction is prostaglandin G3 + AH2 = prostaglandin H3 + A + H2O. It carries out the reaction (8Z,11Z,14Z)-eicosatrienoate + 2 O2 = prostaglandin G1. The enzyme catalyses prostaglandin G1 + AH2 = prostaglandin H1 + A + H2O. It catalyses the reaction 2-(5Z,8Z,11Z,14Z)-eicosatetraenoyl-sn-glycero-3-phosphoethanolamine + 2 O2 = 2-(prostaglandin G2)-sn-glycero-3-phosphoethanolamine. The catalysed reaction is 2-(prostaglandin G2)-sn-glycero-3-phosphoethanolamine + AH2 = 2-(prostaglandin H2)-sn-glycero-3-phosphoethanolamine + A + H2O. It carries out the reaction 2-(5Z,8Z,11Z,14Z)-eicosatetraenoyl-sn-glycero-3-phosphocholine + 2 O2 = 2-(prostaglandin G2)-sn-glycero-3-phosphocholine. The enzyme catalyses 2-(prostaglandin G2)-sn-glycero-3-phosphocholine + AH2 = 2-(prostaglandin H2)-sn-glycero-3-phosphocholine + A + H2O. It catalyses the reaction (15S)-hydroperoxy-(5Z,8Z,11Z,13E)-eicosatetraenoate + AH2 = (15S)-hydroxy-(5Z,8Z,11Z,13E)-eicosatetraenoate + A + H2O. The catalysed reaction is 2-(5Z,8Z,11Z,14Z)-eicosatetraenoyl-sn-glycero-3-phosphocholine + AH2 + O2 = 2-[(15S)-hydroxy-(5Z,8Z,11Z,13E)-eicosatetraenoyl]-sn-glycero-3-phosphocholine + A + H2O. It carries out the reaction 2-(5Z,8Z,11Z,14Z)-eicosatetraenoyl-sn-glycero-3-phosphocholine + AH2 + O2 = 2-[(15R)-hydroxy-(5Z,8Z,11Z,13E)-eicosatetraenoyl]-sn-glycero-3-phosphocholine + A + H2O. The enzyme catalyses 2-(5Z,8Z,11Z,14Z)-eicosatetraenoyl-sn-glycero-3-phosphocholine + AH2 + O2 = 2-[(11R)-hydroxy-(5Z,8Z,12E,14Z)-eicosatetraenoyl]-sn-glycero-3-phosphocholine + A + H2O. It catalyses the reaction (9Z,12Z)-octadecadienoate + AH2 + O2 = 9-hydroxy-(10E,12Z)-octadecadienoate + A + H2O. The catalysed reaction is (9Z,12Z)-octadecadienoate + AH2 + O2 = 13-hydroxy-(9Z,11E)-octadecadienoate + A + H2O. It carries out the reaction (5Z,8Z,11Z,14Z)-eicosatetraenoate + AH2 + O2 = (15R)-hydroxy-(5Z,8Z,11Z,13E)-eicosatetraenoate + A + H2O. The enzyme catalyses (5Z,8Z,11Z,14Z)-eicosatetraenoate + AH2 + O2 = (11R)-hydroxy-(5Z,8Z,12E,14Z)-eicosatetraenoate + A + H2O. It catalyses the reaction (5Z,8Z,11Z,14Z,17Z)-eicosapentaenoate + AH2 + O2 = (11R)-hydroxy-(5Z,8Z,12E,14Z,17Z)-eicosapentaenoate + A + H2O. The catalysed reaction is (5Z,8Z,11Z,14Z,17Z)-eicosapentaenoate + AH2 + O2 = (18S)-hydroxy-(5Z,8Z,11Z,14Z,16E)-eicosapentaenoate + A + H2O. It carries out the reaction (5Z,8Z,11Z,14Z,17Z)-eicosapentaenoate + AH2 + O2 = (18R)-hydroxy-(5Z,8Z,11Z,14Z,16E)-eicosapentaenoate + A + H2O. The enzyme catalyses (5Z,8Z,11Z,14Z,17Z)-eicosapentaenoate + AH2 + O2 = (15R)-hydroxy-(5Z,8Z,11Z,13E,17Z)-eicosapentaenoate + A + H2O. It catalyses the reaction (5Z,8Z,11Z,14Z,17Z)-eicosapentaenoate + AH2 + O2 = (15S)-hydroxy-(5Z,8Z,11Z,13E,17Z)-eicosapentaenoate + A + H2O. The catalysed reaction is (7Z,10Z,13Z,16Z,19Z)-docosapentaenoate + AH2 + O2 = 13R-hydroxy-(7Z,10Z,14E,16Z,19Z)-docosapentaenoate + A + H2O. It carries out the reaction (4Z,7Z,10Z,13Z,16Z,19Z)-docosahexaenoate + AH2 + O2 = 13-hydroxy-(4Z,7Z,10Z,14E,16Z,19Z)-docosahexaenoate + A + H2O. The enzyme catalyses (5S)-hydroxy-(6E,8Z,11Z,14Z)-eicosatetraenoate + AH2 + O2 = (5S,15R)-dihydroxy-(6E,8Z,11Z,13E)-eicosatetraenoate + A + H2O. It catalyses the reaction (4Z,7Z,10Z,13Z,16Z,19Z)-docosahexaenoate + AH2 + O2 = 17R-hydroxy-(4Z,7Z,10Z,13Z,15E,19Z)-docosahexaenoate + A + H2O. The catalysed reaction is (5S)-hydroxy-(6E,8Z,11Z,14Z)-eicosatetraenoate + AH2 + O2 = (5S,15S)-dihydroxy-(6E,8Z,11Z,13E)-eicosatetraenoate + A + H2O. It carries out the reaction (5S)-hydroxy-(6E,8Z,11Z,14Z)-eicosatetraenoate + AH2 + O2 = (5S,11R)-dihydroxy-(6E,8Z,12E,14Z)-eicosatetraenoate + A + H2O. The enzyme catalyses 2-(5Z,8Z,11Z,14Z-eicosatetraenoyl)-glycerol + 2 O2 = 2-glyceryl-prostaglandin G2. It catalyses the reaction 2-glyceryl-prostaglandin G2 + AH2 = 2-glyceryl-prostaglandin H2 + A + H2O. The catalysed reaction is (5Z,8Z,11Z,14Z)-eicosatetraenoate + O2 = (15R)-hydroperoxy-(5Z,8Z,11Z,13E)-eicosatetraenoate. It carries out the reaction (5Z,8Z,11Z,14Z)-eicosatetraenoate + O2 = 11R-hydroperoxy-(5Z,8Z,12E,14Z)-eicosatetraenoate. The enzyme catalyses (9Z,12Z)-octadecadienoate + AH2 + O2 = (9R)-hydroxy-(10E,12Z)-octadecadienoate + A + H2O. It catalyses the reaction (9Z,12Z)-octadecadienoate + AH2 + O2 = (9S)-hydroxy-(10E,12Z)-octadecadienoate + A + H2O. The catalysed reaction is (9Z,12Z)-octadecadienoate + AH2 + O2 = (13S)-hydroxy-(9Z,11E)-octadecadienoate + A + H2O. It carries out the reaction (9Z,12Z)-octadecadienoate + AH2 + O2 = (13R)-hydroxy-(9Z,11E)-octadecadienoate + A + H2O. The protein operates within lipid metabolism; prostaglandin biosynthesis. With respect to regulation, inhibited by the nonsteroidal anti-inflammatory drugs aspirin, naproxen, diclofenac, meclofenamic acid, indomethacin and their analogs. Its function is as follows. Dual cyclooxygenase and peroxidase in the biosynthesis pathway of prostanoids, a class of C20 oxylipins mainly derived from arachidonate, with a particular role in the inflammatory response. The cyclooxygenase activity oxygenates arachidonate (AA, C20:4(n-6)) to the hydroperoxy endoperoxide prostaglandin G2 (PGG2), and the peroxidase activity reduces PGG2 to the hydroxy endoperoxide PGH2, the precursor of all 2-series prostaglandins and thromboxanes. This complex transformation is initiated by abstraction of hydrogen at carbon 13 (with S-stereochemistry), followed by insertion of molecular O2 to form the endoperoxide bridge between carbon 9 and 11 that defines prostaglandins. The insertion of a second molecule of O2 (bis-oxygenase activity) yields a hydroperoxy group in PGG2 that is then reduced to PGH2 by two electrons. Similarly catalyzes successive cyclooxygenation and peroxidation of dihomo-gamma-linoleate (DGLA, C20:3(n-6)) and eicosapentaenoate (EPA, C20:5(n-3)) to corresponding PGH1 and PGH3, the precursors of 1- and 3-series prostaglandins. In an alternative pathway of prostanoid biosynthesis, converts 2-arachidonoyl lysophopholipids to prostanoid lysophopholipids, which are then hydrolyzed by intracellular phospholipases to release free prostanoids. Metabolizes 2-arachidonoyl glycerol yielding the glyceryl ester of PGH2, a process that can contribute to pain response. Generates lipid mediators from n-3 and n-6 polyunsaturated fatty acids (PUFAs) via a lipoxygenase-type mechanism. Oxygenates PUFAs to hydroperoxy compounds and then reduces them to corresponding alcohols. Plays a role in the generation of resolution phase interaction products (resolvins) during both sterile and infectious inflammation. Metabolizes docosahexaenoate (DHA, C22:6(n-3)) to 17R-HDHA, a precursor of the D-series resolvins (RvDs). As a component of the biosynthetic pathway of E-series resolvins (RvEs), converts eicosapentaenoate (EPA, C20:5(n-3)) primarily to 18S-HEPE that is further metabolized by ALOX5 and LTA4H to generate 18S-RvE1 and 18S-RvE2. In vascular endothelial cells, converts docosapentaenoate (DPA, C22:5(n-3)) to 13R-HDPA, a precursor for 13-series resolvins (RvTs) shown to activate macrophage phagocytosis during bacterial infection. In activated leukocytes, contributes to oxygenation of hydroxyeicosatetraenoates (HETE) to diHETES (5,15-diHETE and 5,11-diHETE). Can also use linoleate (LA, (9Z,12Z)-octadecadienoate, C18:2(n-6)) as substrate and produce hydroxyoctadecadienoates (HODEs) in a regio- and stereospecific manner, being (9R)-HODE ((9R)-hydroxy-(10E,12Z)-octadecadienoate) and (13S)-HODE ((13S)-hydroxy-(9Z,11E)-octadecadienoate) its major products. During neuroinflammation, plays a role in neuronal secretion of specialized preresolving mediators (SPMs) 15R-lipoxin A4 that regulates phagocytic microglia. This chain is Prostaglandin G/H synthase 2, found in Mus musculus (Mouse).